The chain runs to 453 residues: uncharacterized protein (453 aa).

Residues 276 to 437 (IAQTKQIKAL…TKQIVRGSST (162 aa)) enclose the YrdC-like domain.

This is an uncharacterized protein from Mycoplasma pneumoniae (strain ATCC 29342 / M129 / Subtype 1) (Mycoplasmoides pneumoniae).